The sequence spans 235 residues: Aspartate/glutamate leucyltransferase (235 aa).

The protein belongs to the R-transferase family. Bpt subfamily.

It is found in the cytoplasm. It catalyses the reaction N-terminal L-glutamyl-[protein] + L-leucyl-tRNA(Leu) = N-terminal L-leucyl-L-glutamyl-[protein] + tRNA(Leu) + H(+). The catalysed reaction is N-terminal L-aspartyl-[protein] + L-leucyl-tRNA(Leu) = N-terminal L-leucyl-L-aspartyl-[protein] + tRNA(Leu) + H(+). Functionally, functions in the N-end rule pathway of protein degradation where it conjugates Leu from its aminoacyl-tRNA to the N-termini of proteins containing an N-terminal aspartate or glutamate. The protein is Aspartate/glutamate leucyltransferase of Pseudomonas paraeruginosa (strain DSM 24068 / PA7) (Pseudomonas aeruginosa (strain PA7)).